The following is a 606-amino-acid chain: Aspartate--tRNA(Asp/Asn) ligase (606 aa).

Position 196 (Glu-196) interacts with L-aspartate. An aspartate region spans residues 220 to 223; that stretch reads QIFK. An L-aspartate-binding site is contributed by Arg-242. Residues 242–244 and Gln-251 each bind ATP; that span reads RDE. His-465 lines the L-aspartate pocket. Position 499 (Glu-499) interacts with ATP. Arg-506 serves as a coordination point for L-aspartate. 551 to 554 is a binding site for ATP; it reads GMDR.

This sequence belongs to the class-II aminoacyl-tRNA synthetase family. Type 1 subfamily. Homodimer.

The protein resides in the cytoplasm. It catalyses the reaction tRNA(Asx) + L-aspartate + ATP = L-aspartyl-tRNA(Asx) + AMP + diphosphate. In terms of biological role, aspartyl-tRNA synthetase with relaxed tRNA specificity since it is able to aspartylate not only its cognate tRNA(Asp) but also tRNA(Asn). Reaction proceeds in two steps: L-aspartate is first activated by ATP to form Asp-AMP and then transferred to the acceptor end of tRNA(Asp/Asn). The chain is Aspartate--tRNA(Asp/Asn) ligase from Oleidesulfovibrio alaskensis (strain ATCC BAA-1058 / DSM 17464 / G20) (Desulfovibrio alaskensis).